The sequence spans 161 residues: SsrA-binding protein (161 aa).

The protein belongs to the SmpB family.

Its subcellular location is the cytoplasm. Required for rescue of stalled ribosomes mediated by trans-translation. Binds to transfer-messenger RNA (tmRNA), required for stable association of tmRNA with ribosomes. tmRNA and SmpB together mimic tRNA shape, replacing the anticodon stem-loop with SmpB. tmRNA is encoded by the ssrA gene; the 2 termini fold to resemble tRNA(Ala) and it encodes a 'tag peptide', a short internal open reading frame. During trans-translation Ala-aminoacylated tmRNA acts like a tRNA, entering the A-site of stalled ribosomes, displacing the stalled mRNA. The ribosome then switches to translate the ORF on the tmRNA; the nascent peptide is terminated with the 'tag peptide' encoded by the tmRNA and targeted for degradation. The ribosome is freed to recommence translation, which seems to be the essential function of trans-translation. This chain is SsrA-binding protein, found in Haemophilus influenzae (strain 86-028NP).